The chain runs to 664 residues: Alkaline/neutral invertase C, mitochondrial (664 aa).

Ser41, Ser125, and Ser657 each carry phosphoserine.

The protein belongs to the glycosyl hydrolase 100 family. As to expression, expressed in seedlings, roots and flowers.

It localises to the mitochondrion. It catalyses the reaction Hydrolysis of terminal non-reducing beta-D-fructofuranoside residues in beta-D-fructofuranosides.. In terms of biological role, mitochondrial invertase that cleaves sucrose into glucose and fructose and is involved in the regulation of aerial tissue development and floral transition. May be modulating hormone balance in relation to the radicle emergence. The protein is Alkaline/neutral invertase C, mitochondrial of Arabidopsis thaliana (Mouse-ear cress).